A 900-amino-acid polypeptide reads, in one-letter code: Bifunctional uridylyltransferase/uridylyl-removing enzyme (900 aa).

Residues 1–342 (MPQVDPELFD…WEGESGPIVP (342 aa)) are uridylyltransferase. The interval 343–705 (LNSRFQVRDG…TTQREFEGGT (363 aa)) is uridylyl-removing. The 123-residue stretch at 461–583 (VDAHTLNVIK…VGDETHLDYL (123 aa)) folds into the HD domain. ACT domains lie at 706-789 (QIFI…IIQR) and 816-896 (ILEI…PSPS).

Belongs to the GlnD family. Requires Mg(2+) as cofactor.

The enzyme catalyses [protein-PII]-L-tyrosine + UTP = [protein-PII]-uridylyl-L-tyrosine + diphosphate. The catalysed reaction is [protein-PII]-uridylyl-L-tyrosine + H2O = [protein-PII]-L-tyrosine + UMP + H(+). With respect to regulation, uridylyltransferase (UTase) activity is inhibited by glutamine, while glutamine activates uridylyl-removing (UR) activity. In terms of biological role, modifies, by uridylylation and deuridylylation, the PII regulatory proteins (GlnB and homologs), in response to the nitrogen status of the cell that GlnD senses through the glutamine level. Under low glutamine levels, catalyzes the conversion of the PII proteins and UTP to PII-UMP and PPi, while under higher glutamine levels, GlnD hydrolyzes PII-UMP to PII and UMP (deuridylylation). Thus, controls uridylylation state and activity of the PII proteins, and plays an important role in the regulation of nitrogen fixation and metabolism. The sequence is that of Bifunctional uridylyltransferase/uridylyl-removing enzyme from Stutzerimonas stutzeri (strain A1501) (Pseudomonas stutzeri).